Here is a 62-residue protein sequence, read N- to C-terminus: Kurtoxin-like I (62 aa).

Positions 2 to 62 (IDGYPVDNWN…ARIKRGGRCN (61 aa)) constitute an LCN-type CS-alpha/beta domain. Disulfide bonds link Cys12/Cys61, Cys16/Cys37, Cys23/Cys44, and Cys27/Cys46.

Expressed by the venom gland.

It is found in the secreted. Its function is as follows. This neurotoxin acts on sodium and calcium channels. Potently inhibits native voltage-gated T-type calcium channel activity in mouse male germ cells and weakly blocks Cav3.3/CACNA1I channels expressed in Xenopus oocytes. In addition, significantly slows the inactivation of activated recombinant sodium channels (Nav1.5/SCN5A). The protein is Kurtoxin-like I of Parabuthus granulatus (Granulated thick-tailed scorpion).